A 492-amino-acid chain; its full sequence is Stromelysin-3 (492 aa).

Positions M1 to A35 are cleaved as a signal peptide. The propeptide at R36–R101 is activation peptide. Residues L82–L89 carry the Cysteine switch motif. Zn(2+) is bound by residues C84, H168, and D170. Ca(2+) contacts are provided by D175, G176, G178, and I180. Zn(2+) contacts are provided by H183, H196, and H219. Residue E220 is part of the active site. Positions 223 and 229 each coordinate Zn(2+). Hemopexin repeat units lie at residues P295–L343, P344–L386, G388–V436, and P437–C484. C298 and C484 are disulfide-bonded.

Belongs to the peptidase M10A family. It depends on Ca(2+) as a cofactor. Zn(2+) is required as a cofactor. In terms of processing, the precursor is cleaved by a furin endopeptidase. Specifically expressed in the mammary gland during apoptosis.

The protein localises to the secreted. Its subcellular location is the extracellular space. It localises to the extracellular matrix. Functionally, may play an important role in the progression of epithelial malignancies. The sequence is that of Stromelysin-3 (Mmp11) from Mus musculus (Mouse).